Here is a 115-residue protein sequence, read N- to C-terminus: Large ribosomal subunit protein uL18 (115 aa).

Belongs to the universal ribosomal protein uL18 family. As to quaternary structure, part of the 50S ribosomal subunit; part of the 5S rRNA/L5/L18/L25 subcomplex. Contacts the 5S and 23S rRNAs.

In terms of biological role, this is one of the proteins that bind and probably mediate the attachment of the 5S RNA into the large ribosomal subunit, where it forms part of the central protuberance. This is Large ribosomal subunit protein uL18 from Marinobacter nauticus (strain ATCC 700491 / DSM 11845 / VT8) (Marinobacter aquaeolei).